Here is a 313-residue protein sequence, read N- to C-terminus: Ribosomal RNA small subunit methyltransferase H (313 aa).

S-adenosyl-L-methionine contacts are provided by residues 35–37, Asp55, Phe79, Asp100, and Gln107; that span reads GGH.

This sequence belongs to the methyltransferase superfamily. RsmH family.

The protein localises to the cytoplasm. The enzyme catalyses cytidine(1402) in 16S rRNA + S-adenosyl-L-methionine = N(4)-methylcytidine(1402) in 16S rRNA + S-adenosyl-L-homocysteine + H(+). In terms of biological role, specifically methylates the N4 position of cytidine in position 1402 (C1402) of 16S rRNA. This chain is Ribosomal RNA small subunit methyltransferase H, found in Burkholderia orbicola (strain AU 1054).